The sequence spans 529 residues: MFTVLTRQPCEQAGLKALYRTPTIIALVVLLVSIVVLVSITVIQIHKQEVLPPGLKYGIVLDAGSSRTTVYVYQWPAEKENNTGVVSQTFKCSVKGSGISSYGNNPQDVPRAFEECMQKVKGQVPSHLHGSTPIHLGATAGMRLLRLQNETAANEVLESIQSYFKSQPFDFRGAQIISGQEEGVYGWITANYLMGNFLEKNLWHMWVHPHGVETTGALDLGGASTQISFVAGEKMDLNTSDIMQVSLYGYVYTLYTHSFQCYGRNEAEKKFLAMLLQNSPTKNHLTNPCYPRDYSISFTMGHVFDSLCTVDQRPESYNPNDVITFEGTGDPSLCKEKVASIFDFKACHDQETCSFDGVYQPKIKGPFVAFAGFYYTASALNLSGSFSLDTFNSSTWNFCSQNWSQLPLLLPKFDEVYARSYCFSANYIYHLFVNGYKFTEETWPQIHFEKEVGNSSIAWSLGYMLSLTNQIPAESPLIRLPIEPPVFVGTLAFFTAAALLCLAFLAYLCSATRRKRHSEHAFDHAVDSD.

The Cytoplasmic segment spans residues 1-22 (MFTVLTRQPCEQAGLKALYRTP). A helical membrane pass occupies residues 23 to 43 (TIIALVVLLVSIVVLVSITVI). At 44–485 (QIHKQEVLPP…PLIRLPIEPP (442 aa)) the chain is on the extracellular side. Asn-81 is a glycosylation site (N-linked (GlcNAc...) asparagine). Cys-92 and Cys-116 are disulfide-bonded. A glycan (N-linked (GlcNAc...) asparagine) is linked at Asn-149. Glu-182 functions as the Proton acceptor in the catalytic mechanism. 222 to 226 (GASTQ) contributes to the ATP binding site. Asn-238 carries an N-linked (GlcNAc...) asparagine glycan. Intrachain disulfides connect Cys-261–Cys-308, Cys-289–Cys-334, and Cys-347–Cys-353. Asn-381, Asn-392, Asn-402, and Asn-454 each carry an N-linked (GlcNAc...) asparagine glycan. A disulfide bond links Cys-399 and Cys-422. The chain crosses the membrane as a helical span at residues 486-506 (VFVGTLAFFTAAALLCLAFLA). Residues 507–529 (YLCSATRRKRHSEHAFDHAVDSD) lie on the Cytoplasmic side of the membrane.

The protein belongs to the GDA1/CD39 NTPase family. Ca(2+) serves as cofactor. It depends on Mg(2+) as a cofactor. In terms of tissue distribution, expressed in adult brain, pancreas, spleen and prostate. Moderate or low expression is seen in most tissues. Not expressed in liver and peripheral blood leukocytes.

It localises to the cell membrane. The enzyme catalyses a ribonucleoside 5'-triphosphate + 2 H2O = a ribonucleoside 5'-phosphate + 2 phosphate + 2 H(+). In terms of biological role, has a threefold preference for the hydrolysis of ATP over ADP. The sequence is that of Ectonucleoside triphosphate diphosphohydrolase 3 (ENTPD3) from Homo sapiens (Human).